A 153-amino-acid polypeptide reads, in one-letter code: Movement protein (153 aa).

2 disordered regions span residues 1-24 and 107-153; these read MAQE…EQDP and ALSL…RNQR. 2 stretches are compositionally biased toward polar residues: residues 109–122 and 140–153; these read SLLS…NQPW and GQRQ…RNQR.

Belongs to the luteoviruses movement protein family.

The protein resides in the host nucleus envelope. Functionally, transports viral genome to neighboring plant cells directly through plasmosdesmata, without any budding. The movement protein allows efficient cell to cell propagation, by bypassing the host cell wall barrier. Acts as a suppressor of RNA-mediated gene silencing, also known as post-transcriptional gene silencing (PTGS), a mechanism of plant viral defense that limits the accumulation of viral RNAs. The chain is Movement protein from Avena byzantina (Oat).